A 292-amino-acid polypeptide reads, in one-letter code: uncharacterized protein (292 aa).

The protein resides in the virion. This is an uncharacterized protein from Acanthamoeba polyphaga (Amoeba).